The following is a 600-amino-acid chain: Glutamine--fructose-6-phosphate aminotransferase [isomerizing] (600 aa).

Cys-2 serves as the catalytic Nucleophile; for GATase activity. Residues 2-217 (CGIVGYIGTE…DEEIVIVTKD (216 aa)) enclose the Glutamine amidotransferase type-2 domain. SIS domains are found at residues 283–422 (IRQA…AKGI) and 452–590 (IARD…VDKP). Lys-595 acts as the For Fru-6P isomerization activity in catalysis.

Homodimer.

Its subcellular location is the cytoplasm. It carries out the reaction D-fructose 6-phosphate + L-glutamine = D-glucosamine 6-phosphate + L-glutamate. Its function is as follows. Catalyzes the first step in hexosamine metabolism, converting fructose-6P into glucosamine-6P using glutamine as a nitrogen source. This chain is Glutamine--fructose-6-phosphate aminotransferase [isomerizing], found in Halalkalibacterium halodurans (strain ATCC BAA-125 / DSM 18197 / FERM 7344 / JCM 9153 / C-125) (Bacillus halodurans).